The sequence spans 851 residues: MGNCVALEISCDQTLNHACGCLFGDRNYILKMEANLEALQNTMQELEERRDDLLRRVVIEEDKGLQRLAQVQGWLSRVKDVCSQVNDLLKAKSIQTERLCLCGYCSKNFISGRNYGINVLKKLKHVEGLLAKGVFEVVAEKIPAPKVEKKHIQTTVGLDAMVGRAWNSLMKDERRTLGLYGMGGVGKTTLLASINNKFLEGMNGFDLVIWVVVSKDLQNEGIQEQILGRLGLHRGWKQVTEKEKASYICNILNVKKFVLLLDDLWSEVDLEKIGVPPLTRENGSKIVFTTRSKDVCRDMEVDGEMKVDCLPPDEAWELFQKKVGPIPLQSHEDIPTLARKVAEKCCGLPLALSVIGKAMASRETVQEWQHVIHVLNSSSHEFPSMEEKILPVLKFSYDDLKDEKVKLCFLYCSLFPEDYEVRKEELIEYWMCEGFIDGNEDEDGANNKGHDIIGSLVRAHLLMDGELTTKVKMHDVIREMALWIASNFGKQKETLCVKPGVQLCHIPKDINWESLRRMSLMCNQIANISSSSNSPNLSTLLLQNNKLVHISCDFFRFMPALVVLDLSRNSSLSSLPEAISKLGSLQYINLSTTGIKWLPVSFKELKKLIHLNLEFTDELESIVGIATSLPNLQVLKLFSSRVCIDGSLMEELLLLEHLKVLTATIKDALILESIQGVDRLVSSIQALCLRNMSAPVIILNTVALGGLQHLEIVGSKISEIKIDWERKGRGELKCTSSPGFKHLSVVEIFNLEGPRDLTWLLFAQNLRRLSVTLSLTIEEIINKEKGMSITNVHPNIVVPFGKLEFLEVRGLDELKRICWNPPALPNLRQFDVRSCLKLPEAATEFPRHANE.

The 303-residue stretch at 139–441 folds into the NB-ARC domain; that stretch reads AEKIPAPKVE…CEGFIDGNED (303 aa). 181–188 contributes to the ATP binding site; sequence GMGGVGKT. LRR repeat units follow at residues 514 to 535, 536 to 557, 560 to 582, 584 to 605, and 607 to 629; these read SLRR…SNSP, NLST…FFRF, ALVV…ISKL, SLQY…FKEL, and KLIH…ATSL.

This sequence belongs to the disease resistance NB-LRR family.

In terms of biological role, probable disease resistance protein. The protein is Probable disease resistance protein At1g15890 of Arabidopsis thaliana (Mouse-ear cress).